The chain runs to 228 residues: Urease accessory protein UreF 1 (228 aa).

The protein belongs to the UreF family. In terms of assembly, ureD, UreF and UreG form a complex that acts as a GTP-hydrolysis-dependent molecular chaperone, activating the urease apoprotein by helping to assemble the nickel containing metallocenter of UreC. The UreE protein probably delivers the nickel.

The protein localises to the cytoplasm. Its function is as follows. Required for maturation of urease via the functional incorporation of the urease nickel metallocenter. The chain is Urease accessory protein UreF 1 from Brucella anthropi (strain ATCC 49188 / DSM 6882 / CCUG 24695 / JCM 21032 / LMG 3331 / NBRC 15819 / NCTC 12168 / Alc 37) (Ochrobactrum anthropi).